A 622-amino-acid polypeptide reads, in one-letter code: Probable potassium transport system protein Kup 1 (622 aa).

12 consecutive transmembrane segments (helical) span residues 7-27 (LLVL…TSPL), 50-70 (LISL…VLFL), 96-116 (TAIL…DAMI), 132-152 (VTPA…LLLF), 165-185 (FFGP…FVHI), 210-230 (VGIV…ALYA), 244-264 (WFTV…AFVL), 282-302 (ALLP…QAVI), 334-354 (IYLP…VFLF), 360-380 (LATA…VLSF), 391-411 (TWWA…FLGA), and 416-436 (IHDG…IMWT).

It belongs to the HAK/KUP transporter (TC 2.A.72) family.

The protein resides in the cell inner membrane. It catalyses the reaction K(+)(in) + H(+)(in) = K(+)(out) + H(+)(out). In terms of biological role, transport of potassium into the cell. Likely operates as a K(+):H(+) symporter. The sequence is that of Probable potassium transport system protein Kup 1 from Rhizobium meliloti (strain 1021) (Ensifer meliloti).